The sequence spans 198 residues: Large ribosomal subunit protein eL18 (198 aa).

Residues 157 to 198 (RHFGASGVPGSHSKPYATNRGKETKRGRRTGRSYKRKAFRHV) are disordered. Residues 179–198 (ETKRGRRTGRSYKRKAFRHV) show a composition bias toward basic residues.

It belongs to the eukaryotic ribosomal protein eL18 family.

The protein localises to the cytoplasm. This chain is Large ribosomal subunit protein eL18 (RPL18-A), found in Leishmania major.